We begin with the raw amino-acid sequence, 446 residues long: Adenylosuccinate synthetase (446 aa).

GTP-binding positions include 20 to 26 (GDEGKGK) and 48 to 50 (GHT). The active-site Proton acceptor is Asp-21. 2 residues coordinate Mg(2+): Asp-21 and Gly-48. IMP contacts are provided by residues 21–24 (DEGK), 46–49 (NAGH), Thr-137, Arg-151, Gln-232, Thr-247, and Arg-319. His-49 functions as the Proton donor in the catalytic mechanism. 315–321 (SVTGRPR) is a substrate binding site. GTP contacts are provided by residues Arg-321, 347–349 (KLD), and 429–431 (STG).

This sequence belongs to the adenylosuccinate synthetase family. Homodimer. It depends on Mg(2+) as a cofactor.

It is found in the cytoplasm. The catalysed reaction is IMP + L-aspartate + GTP = N(6)-(1,2-dicarboxyethyl)-AMP + GDP + phosphate + 2 H(+). The protein operates within purine metabolism; AMP biosynthesis via de novo pathway; AMP from IMP: step 1/2. Functionally, plays an important role in the de novo pathway of purine nucleotide biosynthesis. Catalyzes the first committed step in the biosynthesis of AMP from IMP. The protein is Adenylosuccinate synthetase of Polynucleobacter asymbioticus (strain DSM 18221 / CIP 109841 / QLW-P1DMWA-1) (Polynucleobacter necessarius subsp. asymbioticus).